A 245-amino-acid polypeptide reads, in one-letter code: uncharacterized protein (245 aa).

Residues methionine 1–alanine 27 form the signal peptide.

This is an uncharacterized protein from Bacillus subtilis (strain 168).